Here is a 302-residue protein sequence, read N- to C-terminus: Sulfate adenylyltransferase subunit 2 (302 aa).

The segment at 280 to 302 is disordered; that stretch reads RQGRAIDHDQSGSMELKKRQGYF.

This sequence belongs to the PAPS reductase family. CysD subfamily. Heterodimer composed of CysD, the smaller subunit, and CysN.

It carries out the reaction sulfate + ATP + H(+) = adenosine 5'-phosphosulfate + diphosphate. It functions in the pathway sulfur metabolism; hydrogen sulfide biosynthesis; sulfite from sulfate: step 1/3. With CysN forms the ATP sulfurylase (ATPS) that catalyzes the adenylation of sulfate producing adenosine 5'-phosphosulfate (APS) and diphosphate, the first enzymatic step in sulfur assimilation pathway. APS synthesis involves the formation of a high-energy phosphoric-sulfuric acid anhydride bond driven by GTP hydrolysis by CysN coupled to ATP hydrolysis by CysD. This Vibrio parahaemolyticus serotype O3:K6 (strain RIMD 2210633) protein is Sulfate adenylyltransferase subunit 2.